An 886-amino-acid polypeptide reads, in one-letter code: DNA gyrase subunit A (886 aa).

A Topo IIA-type catalytic domain is found at 35 to 501 (LPDVRDGLKP…GFEDLEDEDL (467 aa)). Catalysis depends on Tyr-123, which acts as the O-(5'-phospho-DNA)-tyrosine intermediate. The GyrA-box motif lies at 528 to 534 (QNRGGRG). A disordered region spans residues 810–860 (VKEDADEENEDEQSTVSEDGTEQQREAVVNDETPGNAIHTEVIDSEVNDED). The segment covering 813 to 822 (DADEENEDEQ) has biased composition (acidic residues).

It belongs to the type II topoisomerase GyrA/ParC subunit family. Heterotetramer, composed of two GyrA and two GyrB chains. In the heterotetramer, GyrA contains the active site tyrosine that forms a transient covalent intermediate with DNA, while GyrB binds cofactors and catalyzes ATP hydrolysis.

The protein localises to the cytoplasm. The enzyme catalyses ATP-dependent breakage, passage and rejoining of double-stranded DNA.. In terms of biological role, a type II topoisomerase that negatively supercoils closed circular double-stranded (ds) DNA in an ATP-dependent manner to modulate DNA topology and maintain chromosomes in an underwound state. Negative supercoiling favors strand separation, and DNA replication, transcription, recombination and repair, all of which involve strand separation. Also able to catalyze the interconversion of other topological isomers of dsDNA rings, including catenanes and knotted rings. Type II topoisomerases break and join 2 DNA strands simultaneously in an ATP-dependent manner. The protein is DNA gyrase subunit A of Staphylococcus aureus (strain MRSA252).